A 302-amino-acid polypeptide reads, in one-letter code: Mas-related G-protein coupled receptor member A3 (302 aa).

Over 1–17 (MNETIPGSIDIETLIPD) the chain is Extracellular. Asn2 carries an N-linked (GlcNAc...) asparagine glycan. A helical membrane pass occupies residues 18–38 (LMIIIFGLVGLTGNAIVFWLL). Over 39-46 (GFRMHRTA) the chain is Cytoplasmic. The helical transmembrane segment at 47-67 (FLVYILNLALADFLFLLCHII) threads the bilayer. N-linked (GlcNAc...) asparagine glycosylation occurs at Asn68. Topologically, residues 68–81 (NSTVDLLKFTLPKG) are extracellular. Residues 82-102 (IFAFCFHTIKRVLYITGLSML) form a helical membrane-spanning segment. At 103–129 (SAISTERCLSVLCPIWYHCRRPEHTST) the chain is on the cytoplasmic side. A helical membrane pass occupies residues 130–150 (VMCAVIWVLSLLICILDGYFC). The Extracellular segment spans residues 151–167 (GYLDNHYFNYSVCQAWD). Asn159 is a glycosylation site (N-linked (GlcNAc...) asparagine). Residues 168–188 (IFIGAYLMFLFVVLCLSTLAL) traverse the membrane as a helical segment. Residues 189-211 (LARLFCGARNMKFTRLFVTIMLT) are Cytoplasmic-facing. The helical transmembrane segment at 212–232 (VLVFLLCGLPWGITWFLLFWI) threads the bilayer. The Extracellular portion of the chain corresponds to 233-242 (APGVFVLDYS). The helical transmembrane segment at 243 to 263 (PLLVLTAINSCANPIIYFFVG) threads the bilayer. Over 264–302 (SFRQRLNKQTLKMVLQKALQDTPETPENMVEMSRNKAEP) the chain is Cytoplasmic.

It belongs to the G-protein coupled receptor 1 family. Mas subfamily. Expressed exclusively in dorsal root ganglia and nodose ganglia. Expressed in a subset of sensory neurons that includes nociceptors. Expressed in the subclass of non-peptidergic sensory neurons that are IB4(+) and VR1(-).

It is found in the cell membrane. Its function is as follows. Orphan receptor. May be a receptor for RFamide-family neuropeptides such as NPFF and NPAF, which are analgesic in vivo. May regulate nociceptor function and/or development, including the sensation or modulation of pain. Activated by the antimalarial drug chloroquine. Mediates chloroquine-induced itch, in a histamine-independent manner. The polypeptide is Mas-related G-protein coupled receptor member A3 (Mrgpra3) (Mus musculus (Mouse)).